The following is a 512-amino-acid chain: Probable DNA ligase (512 aa).

Residue glutamate 208 participates in ATP binding. The active-site N6-AMP-lysine intermediate is lysine 210. The ATP site is built by arginine 215, arginine 230, glutamate 259, phenylalanine 299, arginine 374, and lysine 380.

Belongs to the ATP-dependent DNA ligase family. It depends on Mg(2+) as a cofactor.

The enzyme catalyses ATP + (deoxyribonucleotide)n-3'-hydroxyl + 5'-phospho-(deoxyribonucleotide)m = (deoxyribonucleotide)n+m + AMP + diphosphate.. Its function is as follows. DNA ligase that seals nicks in double-stranded DNA during DNA replication, DNA recombination and DNA repair. This chain is Probable DNA ligase, found in Streptomyces coelicolor (strain ATCC BAA-471 / A3(2) / M145).